Consider the following 506-residue polypeptide: Gallate 1-beta-glucosyltransferase 84A23 (506 aa).

The Proton acceptor role is filled by His-20. His-20 is a binding site for an anthocyanidin. Residues Gln-345, His-360, Trp-363, Asn-364, Ser-365, and Glu-368 each contribute to the UDP-alpha-D-glucose site. Residue Gly-383 coordinates an anthocyanidin. Asp-384 and Gln-385 together coordinate UDP-alpha-D-glucose.

It belongs to the UDP-glycosyltransferase family. In terms of tissue distribution, expressed in roots of the seedlings.

Its subcellular location is the cytoplasm. The catalysed reaction is 3,4,5-trihydroxybenzoate + UDP-alpha-D-glucose = 1-O-galloyl-beta-D-glucose + UDP. It catalyses the reaction 3,4-dihydroxybenzoate + UDP-alpha-D-glucose = 1-O-(3,4-dihydroxy-benzoyl)-beta-D-glucose + UDP. The enzyme catalyses 4-hydroxybenzoate + UDP-alpha-D-glucose = 4-(beta-D-glucosyloxy)benzoate + UDP + H(+). It carries out the reaction (E)-cinnamate + UDP-alpha-D-glucose = 1-O-(trans-cinnamoyl)-beta-D-glucose + UDP. The catalysed reaction is (E)-sinapate + UDP-alpha-D-glucose = 1-O-(trans-sinapoyl)-beta-D-glucose + UDP. It catalyses the reaction (E)-4-coumarate + UDP-alpha-D-glucose = 1-O-(trans-4-coumaroyl)-beta-D-glucose + UDP. The enzyme catalyses (E)-caffeate + UDP-alpha-D-glucose = 1-O-[(E)-caffeoyl]-beta-D-glucose + UDP. It carries out the reaction (E)-ferulate + UDP-alpha-D-glucose = 1-O-[(E)-feruloyl]-beta-D-glucose + UDP. The catalysed reaction is genistein + UDP-alpha-D-glucose = genistein 7-O-beta-D-glucoside + UDP + H(+). It catalyses the reaction apigenin + UDP-alpha-D-glucose = apigenin 7-O-beta-D-glucoside + UDP + H(+). The enzyme catalyses luteolin + UDP-alpha-D-glucose = luteolin 7-O-beta-D-glucoside + UDP + H(+). Functionally, glucosyltransferase that catalyzes the formation of 1-O-beta-D-glucose esters with hydroxybenzoic acids and cinnamic acid including its derivatives as preferred glucosyl acceptors. Has significant activity with gallic acid (3,4,5-trihydroxybenzoic acid), 3,4-dihydroxybenzoic acid, 4-hydroxybenzoic acid, cinnamic acid, sinapic acid, coumaric acid, caffeic acid and ferulic acid in vitro. Gallic acid is the predicted native substrate of the enzyme, which thus catalyzes the formation of 1-O-galloyl-beta-D-glucose, the first committed step of hydrolyzable tannins (HTs) biosynthesis, with punicalagin isomers being the major HTs of pomegranate. Catalyzes the formation of flavonoid glucosides with genistein, apigenin and luteolin in vitro. Has low activity with benzoic acid, 2-hydroxybenzoic acid, 3-hydroxybenzoic acid, 2,4-dihydroxybenzoic acid, naringenin and quercetin. No activity with catechol, resveratrol, chlorogenic acid, catechin and epicatechin (building blocks of proanthocyanidins) or cyanidin, delphinidin and pelargonidin (the three anthocyanidins). The protein is Gallate 1-beta-glucosyltransferase 84A23 of Punica granatum (Pomegranate).